The chain runs to 712 residues: Small ribosomal subunit protein uS3c (712 aa).

Residues 1 to 118 are S3-like 1st part; that stretch reads MGQKVHPLGF…IKVSKDLVTN (118 aa). Residues 119–580 are intervening sequence (IVS); the sequence is LQKTRKYLFK…LQTAFLTQIE (462 aa). Residues 581-712 are S3-like 2nd part; the sequence is SQRKMYKANL…VWIFKGYSKI (132 aa).

This sequence belongs to the universal ribosomal protein uS3 family. Part of the 30S ribosomal subunit.

Its subcellular location is the plastid. It localises to the chloroplast. The protein is Small ribosomal subunit protein uS3c (rps3) of Chlamydomonas reinhardtii (Chlamydomonas smithii).